We begin with the raw amino-acid sequence, 287 residues long: Carbon monoxide dehydrogenase medium chain (287 aa).

The 177-residue stretch at 1-177 (MIPPRFEYHA…VEIRVPAFAQ (177 aa)) folds into the FAD-binding PCMH-type domain. Residues 32–36 (AGGHS) and 111–115 (TIGGD) contribute to the FAD site.

As to quaternary structure, dimer of heterotrimers. Each heterotrimer consists of a large, a medium and a small subunit. FAD is required as a cofactor.

The enzyme catalyses CO + a quinone + H2O = a quinol + CO2. Its function is as follows. Catalyzes the oxidation of carbon monoxide to carbon dioxide. This Hydrogenophaga pseudoflava (Pseudomonas carboxydoflava) protein is Carbon monoxide dehydrogenase medium chain (cutM).